The chain runs to 267 residues: Putative phosphoenolpyruvate synthase regulatory protein (267 aa).

147–154 (GVSRSGKT) contacts ADP.

It belongs to the pyruvate, phosphate/water dikinase regulatory protein family. PSRP subfamily.

The catalysed reaction is [pyruvate, water dikinase] + ADP = [pyruvate, water dikinase]-phosphate + AMP + H(+). It catalyses the reaction [pyruvate, water dikinase]-phosphate + phosphate + H(+) = [pyruvate, water dikinase] + diphosphate. Bifunctional serine/threonine kinase and phosphorylase involved in the regulation of the phosphoenolpyruvate synthase (PEPS) by catalyzing its phosphorylation/dephosphorylation. In Cupriavidus necator (strain ATCC 17699 / DSM 428 / KCTC 22496 / NCIMB 10442 / H16 / Stanier 337) (Ralstonia eutropha), this protein is Putative phosphoenolpyruvate synthase regulatory protein.